The chain runs to 229 residues: Putative N-acetylmannosamine-6-phosphate 2-epimerase (229 aa).

This sequence belongs to the NanE family.

It catalyses the reaction an N-acyl-D-glucosamine 6-phosphate = an N-acyl-D-mannosamine 6-phosphate. It functions in the pathway amino-sugar metabolism; N-acetylneuraminate degradation; D-fructose 6-phosphate from N-acetylneuraminate: step 3/5. Converts N-acetylmannosamine-6-phosphate (ManNAc-6-P) to N-acetylglucosamine-6-phosphate (GlcNAc-6-P). In Cutibacterium acnes (strain DSM 16379 / KPA171202) (Propionibacterium acnes), this protein is Putative N-acetylmannosamine-6-phosphate 2-epimerase.